A 426-amino-acid polypeptide reads, in one-letter code: MINKSIIRNDFKTLETSLKNRNSKLDISSLKDLDKKQSELLLIIESCNKKRNEISKSIGIYIGKKDNKKVDELKKEMESIKNTLETTNEELKTISAKVDDILLSIPNIPDSSVPIGKSEDENVEIKKWGTPTKFDFNHKAHWDLITDLDIGDFERATKVTGSRFFIYKGLGSKLMRALQMLTLDINTSNGYLEMSLPVIVNSASLTSTGQLPKFKEDLFALENSDYYLSPTLEVQLTNYYRNEILEESALPMKFTASSLNFRSEAGSAGKDTRGIIRQHQFYKTELVNLVHPEKSYQALEEMTLNAESILEALELPYRRILLCTGDMGFSSSKTYDIEVWLPSYNSYKEISSCSNCLDFQARRSMIRFKNSKTNKNELVHTLNGSSLALDRLFAAVVENYQNKDGSITIPKALVKYMGIDSIKKTK.

231–233 (TLE) contributes to the L-serine binding site. Position 262–264 (262–264 (RSE)) interacts with ATP. Residue glutamate 285 participates in L-serine binding. ATP is bound at residue 349-352 (EISS). Serine 385 provides a ligand contact to L-serine.

The protein belongs to the class-II aminoacyl-tRNA synthetase family. Type-1 seryl-tRNA synthetase subfamily. As to quaternary structure, homodimer. The tRNA molecule binds across the dimer.

It is found in the cytoplasm. The catalysed reaction is tRNA(Ser) + L-serine + ATP = L-seryl-tRNA(Ser) + AMP + diphosphate + H(+). It carries out the reaction tRNA(Sec) + L-serine + ATP = L-seryl-tRNA(Sec) + AMP + diphosphate + H(+). The protein operates within aminoacyl-tRNA biosynthesis; selenocysteinyl-tRNA(Sec) biosynthesis; L-seryl-tRNA(Sec) from L-serine and tRNA(Sec): step 1/1. Functionally, catalyzes the attachment of serine to tRNA(Ser). Is also able to aminoacylate tRNA(Sec) with serine, to form the misacylated tRNA L-seryl-tRNA(Sec), which will be further converted into selenocysteinyl-tRNA(Sec). The sequence is that of Serine--tRNA ligase from Malacoplasma penetrans (strain HF-2) (Mycoplasma penetrans).